We begin with the raw amino-acid sequence, 72 residues long: Translation initiation factor IF-1 (72 aa).

An S1-like domain is found at 1–72 (MSKEDVIELE…TRGRIVWRSK (72 aa)).

The protein belongs to the IF-1 family. In terms of assembly, component of the 30S ribosomal translation pre-initiation complex which assembles on the 30S ribosome in the order IF-2 and IF-3, IF-1 and N-formylmethionyl-tRNA(fMet); mRNA recruitment can occur at any time during PIC assembly.

The protein resides in the cytoplasm. Its function is as follows. One of the essential components for the initiation of protein synthesis. Stabilizes the binding of IF-2 and IF-3 on the 30S subunit to which N-formylmethionyl-tRNA(fMet) subsequently binds. Helps modulate mRNA selection, yielding the 30S pre-initiation complex (PIC). Upon addition of the 50S ribosomal subunit IF-1, IF-2 and IF-3 are released leaving the mature 70S translation initiation complex. This Caldicellulosiruptor saccharolyticus (strain ATCC 43494 / DSM 8903 / Tp8T 6331) protein is Translation initiation factor IF-1.